The primary structure comprises 540 residues: Putative F-box/LRR-repeat protein At5g41840 (540 aa).

The F-box domain maps to 13-61 (GDRISGLPDALICHILSFLPTKEAASTTVLAKRWKPLLAFVPNLNFDDS). LRR repeat units lie at residues 80–105 (FMSFVDSVLALQAKTKTPLKRFHVKC), 137–165 (RNYCENSSFYSLPSKIFVSKTLVRLKIQF), 189–214 (YFKIETSMLNKLLSGCHALEELVLAN), 217–242 (WADSSEDEACHVSVSIPTLKRLNFCR), 254–282 (YEDYDEENINEGVSLSFDNPNLVYLEYSD), 329–360 (ILYLSDDTLEVLSCCRERIPVFDNLLELTIKT), and 361–386 (TPYVGWKSLPPLLKSCPSLETLVFEG).

The protein is Putative F-box/LRR-repeat protein At5g41840 of Arabidopsis thaliana (Mouse-ear cress).